Here is a 365-residue protein sequence, read N- to C-terminus: tRNA-specific 2-thiouridylase MnmA (365 aa).

ATP-binding positions include 14-21 (AMSGGVDS) and leucine 40. Cysteine 108 functions as the Nucleophile in the catalytic mechanism. Cysteine 108 and cysteine 204 are disulfide-bonded. Glycine 132 serves as a coordination point for ATP. The segment at 154–156 (KDQ) is interaction with tRNA. Cysteine 204 acts as the Cysteine persulfide intermediate in catalysis.

The protein belongs to the MnmA/TRMU family.

Its subcellular location is the cytoplasm. The catalysed reaction is S-sulfanyl-L-cysteinyl-[protein] + uridine(34) in tRNA + AH2 + ATP = 2-thiouridine(34) in tRNA + L-cysteinyl-[protein] + A + AMP + diphosphate + H(+). In terms of biological role, catalyzes the 2-thiolation of uridine at the wobble position (U34) of tRNA, leading to the formation of s(2)U34. This is tRNA-specific 2-thiouridylase MnmA from Rickettsia felis (strain ATCC VR-1525 / URRWXCal2) (Rickettsia azadi).